The following is a 124-amino-acid chain: Putative membrane protein insertion efficiency factor (124 aa).

Belongs to the UPF0161 family.

It is found in the cell inner membrane. Could be involved in insertion of integral membrane proteins into the membrane. This is Putative membrane protein insertion efficiency factor from Psychrobacter cryohalolentis (strain ATCC BAA-1226 / DSM 17306 / VKM B-2378 / K5).